A 73-amino-acid polypeptide reads, in one-letter code: Putative membrane protein insertion efficiency factor (73 aa).

The protein belongs to the UPF0161 family.

It is found in the cell inner membrane. Functionally, could be involved in insertion of integral membrane proteins into the membrane. The polypeptide is Putative membrane protein insertion efficiency factor (Dinoroseobacter shibae (strain DSM 16493 / NCIMB 14021 / DFL 12)).